A 131-amino-acid chain; its full sequence is Ribosome-binding factor A (131 aa).

Belongs to the RbfA family. As to quaternary structure, monomer. Binds 30S ribosomal subunits, but not 50S ribosomal subunits or 70S ribosomes.

It is found in the cytoplasm. In terms of biological role, one of several proteins that assist in the late maturation steps of the functional core of the 30S ribosomal subunit. Associates with free 30S ribosomal subunits (but not with 30S subunits that are part of 70S ribosomes or polysomes). Required for efficient processing of 16S rRNA. May interact with the 5'-terminal helix region of 16S rRNA. The chain is Ribosome-binding factor A from Vibrio vulnificus (strain CMCP6).